The chain runs to 361 residues: S-adenosylmethionine:tRNA ribosyltransferase-isomerase (361 aa).

The protein belongs to the QueA family. As to quaternary structure, monomer.

It is found in the cytoplasm. It catalyses the reaction 7-aminomethyl-7-carbaguanosine(34) in tRNA + S-adenosyl-L-methionine = epoxyqueuosine(34) in tRNA + adenine + L-methionine + 2 H(+). The protein operates within tRNA modification; tRNA-queuosine biosynthesis. Functionally, transfers and isomerizes the ribose moiety from AdoMet to the 7-aminomethyl group of 7-deazaguanine (preQ1-tRNA) to give epoxyqueuosine (oQ-tRNA). The sequence is that of S-adenosylmethionine:tRNA ribosyltransferase-isomerase from Glaesserella parasuis serovar 5 (strain SH0165) (Haemophilus parasuis).